A 52-amino-acid chain; its full sequence is Large ribosomal subunit protein bL33 (52 aa).

It belongs to the bacterial ribosomal protein bL33 family.

This chain is Large ribosomal subunit protein bL33, found in Campylobacter jejuni subsp. doylei (strain ATCC BAA-1458 / RM4099 / 269.97).